The chain runs to 465 residues: Kynureninase (465 aa).

Pyridoxal 5'-phosphate is bound by residues Leu116, Thr117, Phe144–Asp147, Asp231, His234, and Tyr256. Lys257 is subject to N6-(pyridoxal phosphate)lysine. Pyridoxal 5'-phosphate is bound by residues Trp291 and Asn319.

It belongs to the kynureninase family. Homodimer. Requires pyridoxal 5'-phosphate as cofactor.

The protein resides in the cytoplasm. It carries out the reaction L-kynurenine + H2O = anthranilate + L-alanine + H(+). It catalyses the reaction 3-hydroxy-L-kynurenine + H2O = 3-hydroxyanthranilate + L-alanine + H(+). It functions in the pathway amino-acid degradation; L-kynurenine degradation; L-alanine and anthranilate from L-kynurenine: step 1/1. It participates in cofactor biosynthesis; NAD(+) biosynthesis; quinolinate from L-kynurenine: step 2/3. Catalyzes the cleavage of L-kynurenine (L-Kyn) and L-3-hydroxykynurenine (L-3OHKyn) into anthranilic acid (AA) and 3-hydroxyanthranilic acid (3-OHAA), respectively. This is Kynureninase from Scheffersomyces stipitis (strain ATCC 58785 / CBS 6054 / NBRC 10063 / NRRL Y-11545) (Yeast).